A 904-amino-acid chain; its full sequence is MRAATAACRDRRGLCRAEFARLAEAVTPFWLHKELIMTTLTGQARLTNSAAYEQVWQAERQACRTDADPDTLTVGVVVVTRNPAFFQTGLSVLNDIRDYVFNRVHIQSEMPLKLLDLAADSLYLAAREKALHFLKGQNKAINVRIIQCASLAEATGKIIYTHALEQRPEFHLGMLFYDQTTPAGVDDSIEQIDRDLDAFYSALQRSGIPAFYTTFSTVAFIRQLRSPFRYLPQQYREIVRSEDPAIFQTELLCLWMDFFEMNYTNRRVKPIGALALHNTLGEQLIQFFERTAAERWLVSYYTGSIISNLIGYLDRHAEARGALILRGPNEHAIACGAMANWQLYRMPFLGVVTSGMMDEFKGTLANLKETAAQGIIVAAENRGNQWYSFQGTLTPTEDMREVLIARRIPFVYIDDVEMIGAGLTEAFRLYHQGQGPVVILATQNVLESTLSLEGAVCDPSPIPVLSADDPLPMSESLAQAIALINRGPERLVWQLGPVSDDEYALIHDIADAAGIALVDSLAHPGSAPKYYQGRRNPHYLGTLAIYGYSPRVYNFLHTNDKLNAMSEQSLFMIKSRVAQITTPFSDGRLERKVHLVQLTHDDRHLSAYADLHLHMNCLAFLRTVKAHLDVDPALRERRRALIAAYLDSPSDVVSQLPSLPMSANYFFCQLNRVIEELIETEGFDFTGVYDVGRCGISAARNVAKTRRGFSGWYGRALMGDALLATGYLAYTSPSHVMAFIGDGAKGIVPDILPAFIDNILTHPQLLNKSITVFYLCNGGLSVINTYQERILFNRTSRQMRLVNVEQPDVEQTVNNFHIQSKTLTHFDEDVIRQALTTSHRLNLFSVVLGHNNEGDGISPGHRQRLAALIRADHDALQERKAWAAQQPESTSTAFDQDPTQEATS.

The interval 879 to 904 is disordered; the sequence is RKAWAAQQPESTSTAFDQDPTQEATS. A compositionally biased stretch (polar residues) spans 886–904; it reads QPESTSTAFDQDPTQEATS.

The protein belongs to the TPP enzyme family. Thiamine diphosphate serves as cofactor.

The enzyme catalyses (2E)-octenal + pyruvate + H(+) = (S)-3-acetyloctanal + CO2. Its pathway is antibiotic biosynthesis; prodigiosin biosynthesis. Functionally, involved in the biosynthesis of 2-methyl-3-n-amyl-pyrrole (MAP), one of the terminal products involved in the biosynthesis of the red antibiotic prodigiosin (Pig). Catalyzes the decarboxylation of pyruvate, followed by the modification of the resulting two-carbon fragment acetaldehyde at the C3 position of the 2-octenal (1,2-addition of acetaldehyde) giving 3-acetyloctanal. In vitro, it can act on a number of alpha,beta-unsaturated carbonyl compounds, including aldehydes and ketones, and can catalyze both 1,2-addition and Stetter-type 1,4-addition depending on the substrate. In Serratia marcescens, this protein is Thiamine diphosphate dependent-3-acetyloctanal synthase PigD.